A 213-amino-acid chain; its full sequence is Small ribosomal subunit protein uS5 (213 aa).

Residues 1-42 (MSERDRNGGRSADNNRNDRNERGGRNDRGGRNDRRNNQQDER) are disordered. Positions 45 to 108 (YIERVVTINR…EEARKNFFRV (64 aa)) constitute an S5 DRBM domain.

This sequence belongs to the universal ribosomal protein uS5 family. In terms of assembly, part of the 30S ribosomal subunit. Contacts proteins S4 and S8.

With S4 and S12 plays an important role in translational accuracy. Functionally, located at the back of the 30S subunit body where it stabilizes the conformation of the head with respect to the body. The chain is Small ribosomal subunit protein uS5 from Corynebacterium urealyticum (strain ATCC 43042 / DSM 7109).